The chain runs to 444 residues: Phosphoribosylamine--glycine ligase (444 aa).

One can recognise an ATP-grasp domain in the interval 109 to 324 (RNLFKKYEID…FLDVCFAIAE (216 aa)). 140–202 (MTSLGKDVVV…EEKLVGVEFT (63 aa)) serves as a coordination point for ATP. Residues Q282, E294, and N296 each contribute to the Mg(2+) site. Mn(2+)-binding residues include Q282, E294, and N296.

This sequence belongs to the GARS family. It depends on Mg(2+) as a cofactor. Requires Mn(2+) as cofactor.

It catalyses the reaction 5-phospho-beta-D-ribosylamine + glycine + ATP = N(1)-(5-phospho-beta-D-ribosyl)glycinamide + ADP + phosphate + H(+). Its pathway is purine metabolism; IMP biosynthesis via de novo pathway; N(1)-(5-phospho-D-ribosyl)glycinamide from 5-phospho-alpha-D-ribose 1-diphosphate: step 2/2. This chain is Phosphoribosylamine--glycine ligase, found in Methanococcus maripaludis (strain C5 / ATCC BAA-1333).